We begin with the raw amino-acid sequence, 216 residues long: ATP phosphoribosyltransferase (216 aa).

It belongs to the ATP phosphoribosyltransferase family. Short subfamily. In terms of assembly, heteromultimer composed of HisG and HisZ subunits.

It localises to the cytoplasm. It carries out the reaction 1-(5-phospho-beta-D-ribosyl)-ATP + diphosphate = 5-phospho-alpha-D-ribose 1-diphosphate + ATP. Its pathway is amino-acid biosynthesis; L-histidine biosynthesis; L-histidine from 5-phospho-alpha-D-ribose 1-diphosphate: step 1/9. In terms of biological role, catalyzes the condensation of ATP and 5-phosphoribose 1-diphosphate to form N'-(5'-phosphoribosyl)-ATP (PR-ATP). Has a crucial role in the pathway because the rate of histidine biosynthesis seems to be controlled primarily by regulation of HisG enzymatic activity. In Microcystis aeruginosa (strain NIES-843 / IAM M-2473), this protein is ATP phosphoribosyltransferase.